Reading from the N-terminus, the 129-residue chain is Fluoride-specific ion channel FluC (129 aa).

Transmembrane regions (helical) follow at residues valine 4–tryptophan 24, glycine 30–leucine 50, tryptophan 63–valine 83, and isoleucine 95–glycine 115. Residues glycine 73 and threonine 76 each contribute to the Na(+) site.

Belongs to the fluoride channel Fluc/FEX (TC 1.A.43) family.

It localises to the cell membrane. The catalysed reaction is fluoride(in) = fluoride(out). Na(+) is not transported, but it plays an essential structural role and its presence is essential for fluoride channel function. Its function is as follows. Fluoride-specific ion channel. Important for reducing fluoride concentration in the cell, thus reducing its toxicity. The sequence is that of Fluoride-specific ion channel FluC from Oceanobacillus iheyensis (strain DSM 14371 / CIP 107618 / JCM 11309 / KCTC 3954 / HTE831).